Consider the following 98-residue polypeptide: RNA-binding protein Hfq (98 aa).

Residues Asp-11 to Val-71 form the Sm domain.

This sequence belongs to the Hfq family. Homohexamer.

In terms of biological role, RNA chaperone that binds small regulatory RNA (sRNAs) and mRNAs to facilitate mRNA translational regulation in response to envelope stress, environmental stress and changes in metabolite concentrations. Also binds with high specificity to tRNAs. This is RNA-binding protein Hfq from Gluconacetobacter diazotrophicus (strain ATCC 49037 / DSM 5601 / CCUG 37298 / CIP 103539 / LMG 7603 / PAl5).